The chain runs to 234 residues: Protein fmp52, mitochondrial (234 aa).

The transit peptide at 1 to 36 directs the protein to the mitochondrion; sequence MANVALLGCTGMVGSHILTHLLGNSSVARIDTISRR.

It belongs to the FMP52 family.

It is found in the mitochondrion outer membrane. The sequence is that of Protein fmp52, mitochondrial (fmp52) from Aspergillus niger (strain ATCC MYA-4892 / CBS 513.88 / FGSC A1513).